We begin with the raw amino-acid sequence, 77 residues long: MAQQRRGGRRRKVDYIAANHIDYVDYKDVDLLKRFISERGKILPRRVTGTSAKNQRKVANAIKRARIMGLLPFVAED.

This sequence belongs to the bacterial ribosomal protein bS18 family. As to quaternary structure, part of the 30S ribosomal subunit. Forms a tight heterodimer with protein bS6.

Binds as a heterodimer with protein bS6 to the central domain of the 16S rRNA, where it helps stabilize the platform of the 30S subunit. The protein is Small ribosomal subunit protein bS18 of Lactobacillus helveticus (strain DPC 4571).